The chain runs to 396 residues: Bifunctional enzyme Fae/Hps (396 aa).

The interval methionine 1 to isoleucine 161 is formaldehyde-activating enzyme. Catalysis depends on histidine 17, which acts as the Proton donor. 5 residues coordinate substrate: aspartate 19, leucine 48, lysine 66, threonine 68, and glutamine 83. The 3-hexulose-6-phosphate synthase stretch occupies residues methionine 162 to phenylalanine 396.

In the N-terminal section; belongs to the formaldehyde-activating enzyme family. The protein in the C-terminal section; belongs to the HPS/KGPDC family. HPS subfamily.

The catalysed reaction is 5,6,7,8-tetrahydromethanopterin + formaldehyde = 5,10-methylenetetrahydromethanopterin + H2O. It carries out the reaction D-ribulose 5-phosphate + formaldehyde = D-arabino-hex-3-ulose 6-phosphate. Its pathway is carbohydrate biosynthesis; D-ribose 5-phosphate biosynthesis. Catalyzes the condensation of formaldehyde with tetrahydromethanopterin (H(4)MPT) to 5,10-methylenetetrahydromethanopterin. Functionally, catalyzes the reversible formation of ribulose-5-phosphate and formaldehyde from 3-hexulose-6-phosphate. This Methanocella arvoryzae (strain DSM 22066 / NBRC 105507 / MRE50) protein is Bifunctional enzyme Fae/Hps.